A 588-amino-acid polypeptide reads, in one-letter code: Adenine deaminase (588 aa).

Belongs to the metallo-dependent hydrolases superfamily. Adenine deaminase family. In terms of assembly, homodimer. Mn(2+) is required as a cofactor.

It carries out the reaction adenine + H2O + H(+) = hypoxanthine + NH4(+). This chain is Adenine deaminase, found in Escherichia coli O7:K1 (strain IAI39 / ExPEC).